Consider the following 201-residue polypeptide: Ras-related protein Rab-1C (201 aa).

Positions 1-20 (MGCSPSKEGNGSFSSTSTSF) are disordered. G2 is lipidated: N-myristoyl glycine. A lipid anchor (S-palmitoyl cysteine) is attached at C3. GTP-binding positions include 40–48 (GDSGVGKSC), 58–65 (FTDSYIST), 88–92 (DTAGQ), 146–149 (NKCD), and 176–178 (SAK). The Effector region signature appears at 62–70 (YISTIGVDF).

Belongs to the small GTPase superfamily. Rab family. Although this sequence lacks the C-terminal cysteine motifs subject to isoprenylation in other Rab proteins, it does have N-terminal myristoylation and S-palmitoylation sequence motifs.

The protein is Ras-related protein Rab-1C (Rab1C) of Dictyostelium discoideum (Social amoeba).